The primary structure comprises 393 residues: 8-amino-7-oxononanoate synthase (393 aa).

107 to 108 (GF) lines the pyridoxal 5'-phosphate pocket. Histidine 132 serves as a coordination point for substrate. Residues serine 180, 205–208 (DDAH), and 236–239 (TLSK) each bind pyridoxal 5'-phosphate. At lysine 239 the chain carries N6-(pyridoxal phosphate)lysine. A substrate-binding site is contributed by threonine 353.

This sequence belongs to the class-II pyridoxal-phosphate-dependent aminotransferase family. BioF subfamily. Homodimer. Requires pyridoxal 5'-phosphate as cofactor.

It carries out the reaction 6-carboxyhexanoyl-[ACP] + L-alanine + H(+) = (8S)-8-amino-7-oxononanoate + holo-[ACP] + CO2. It functions in the pathway cofactor biosynthesis; biotin biosynthesis. Its function is as follows. Catalyzes the decarboxylative condensation of pimeloyl-[acyl-carrier protein] and L-alanine to produce 8-amino-7-oxononanoate (AON), [acyl-carrier protein], and carbon dioxide. The chain is 8-amino-7-oxononanoate synthase from Coprothermobacter proteolyticus (strain ATCC 35245 / DSM 5265 / OCM 4 / BT).